The primary structure comprises 121 residues: MAMKCVAFVFTQGPHGNAAGREGLDALLATSALSENLGVFFLSDGVLQLLPQQQPEKILARNYIATFGVLPLYDVENFYICEDSLQQRGLSEVTDWILDVEVLSPVNLRRQLANYDVVLTF.

The protein belongs to the DsrF/TusC family. As to quaternary structure, heterohexamer, formed by a dimer of trimers. The hexameric TusBCD complex contains 2 copies each of TusB, TusC and TusD. The TusBCD complex interacts with TusE.

It is found in the cytoplasm. Its function is as follows. Part of a sulfur-relay system required for 2-thiolation of 5-methylaminomethyl-2-thiouridine (mnm(5)s(2)U) at tRNA wobble positions. The polypeptide is Protein TusC (Yersinia enterocolitica serotype O:8 / biotype 1B (strain NCTC 13174 / 8081)).